The following is a 358-amino-acid chain: Flap endonuclease 1 (358 aa).

The segment at 1–103 (MGIKRLSKLI…HEFEKRTKRR (103 aa)) is N-domain. D34 is a Mg(2+) binding site. 2 residues coordinate DNA: R47 and R69. Mg(2+) is bound by residues D85, E157, E159, D178, and D180. Residues 121-252 (LVSKYDRMNV…KRAFEYIKKY (132 aa)) are I-domain. Residue E157 participates in DNA binding. DNA contacts are provided by G230 and D232. D232 serves as a coordination point for Mg(2+). The interval 346–354 (KQTRIDSFF) is interaction with PCNA.

It belongs to the XPG/RAD2 endonuclease family. FEN1 subfamily. In terms of assembly, interacts with PCNA. Three molecules of FEN1 bind to one PCNA trimer with each molecule binding to one PCNA monomer. PCNA stimulates the nuclease activity without altering cleavage specificity. The cofactor is Mg(2+). Post-translationally, phosphorylated. Phosphorylation upon DNA damage induces relocalization to the nuclear plasma.

The protein localises to the nucleus. It localises to the nucleolus. Its subcellular location is the nucleoplasm. The protein resides in the mitochondrion. Functionally, structure-specific nuclease with 5'-flap endonuclease and 5'-3' exonuclease activities involved in DNA replication and repair. During DNA replication, cleaves the 5'-overhanging flap structure that is generated by displacement synthesis when DNA polymerase encounters the 5'-end of a downstream Okazaki fragment. It enters the flap from the 5'-end and then tracks to cleave the flap base, leaving a nick for ligation. Also involved in the long patch base excision repair (LP-BER) pathway, by cleaving within the apurinic/apyrimidinic (AP) site-terminated flap. Acts as a genome stabilization factor that prevents flaps from equilibrating into structures that lead to duplications and deletions. Also possesses 5'-3' exonuclease activity on nicked or gapped double-stranded DNA, and exhibits RNase H activity. Also involved in replication and repair of rDNA and in repairing mitochondrial DNA. The sequence is that of Flap endonuclease 1 from Enterocytozoon bieneusi (strain H348) (Microsporidian parasite).